The following is a 385-amino-acid chain: Exopolygalacturonase rpg16 (385 aa).

The first 26 residues, 1 to 26, serve as a signal peptide directing secretion; that stretch reads MVRFTSFTSPFSAILLLSFGINKVAT. N-linked (GlcNAc...) asparagine glycosylation is found at asparagine 143, asparagine 161, asparagine 164, and asparagine 180. The stretch at 165 to 195 is one PbH1 1 repeat; that stretch reads STNLLLHDFIIHTVSNNSNPAKNTDALDLYH. The active-site Proton donor is the aspartate 210. Cysteines 212 and 229 form a disulfide. Residues asparagine 218 and asparagine 226 are each glycosylated (N-linked (GlcNAc...) asparagine). 3 PbH1 repeats span residues 219–241, 249–270, and 278–299; these read VTKV…GSLG, VTQV…RVKT, and VEDI…IITT. Residue histidine 233 is part of the active site. 3 N-linked (GlcNAc...) asparagine glycosylation sites follow: asparagine 256, asparagine 282, and asparagine 343. A disulfide bond links cysteine 344 and cysteine 350. The stretch at 350–376 is one PbH1 5 repeat; the sequence is CSDVTLTNINISKASNNTKNVCVNLKG. Residues asparagine 359 and asparagine 365 are each glycosylated (N-linked (GlcNAc...) asparagine).

Belongs to the glycosyl hydrolase 28 family. In terms of processing, N-glycosylated.

The protein resides in the secreted. The enzyme catalyses [(1-&gt;4)-alpha-D-galacturonosyl](n) + H2O = alpha-D-galacturonate + [(1-&gt;4)-alpha-D-galacturonosyl](n-1). Specific in hydrolyzing the terminal glycosidic bond of polygalacturonic acid and oligogalacturonates. This chain is Exopolygalacturonase rpg16, found in Rhizopus delemar (strain RA 99-880 / ATCC MYA-4621 / FGSC 9543 / NRRL 43880) (Mucormycosis agent).